A 241-amino-acid chain; its full sequence is Protein unc-119 homolog B-B (241 aa).

The segment at 1–46 (MSGSNREAALAGQPKDERKKSGGGVINRLKARRVQGKESGTSDQSS) is disordered. Position 132 (Tyr-132) interacts with tetradecanoate.

It belongs to the PDE6D/unc-119 family.

The protein localises to the cell projection. The protein resides in the cilium. Functionally, myristoyl-binding protein that acts as a cargo adapter: specifically binds the myristoyl moiety of a subset of N-terminally myristoylated proteins and is required for their localization. Plays a key role in localization of proteins to the primary cilium membrane. This chain is Protein unc-119 homolog B-B (unc119b-b), found in Xenopus laevis (African clawed frog).